Here is a 539-residue protein sequence, read N- to C-terminus: Glutamyl-tRNA(Gln) amidotransferase subunit B, mitochondrial (539 aa).

Belongs to the GatB/GatE family. GatB subfamily. As to quaternary structure, subunit of the heterotrimeric GatFAB amidotransferase (AdT) complex, composed of A, B and F subunits.

It localises to the mitochondrion. It catalyses the reaction L-glutamyl-tRNA(Gln) + L-glutamine + ATP + H2O = L-glutaminyl-tRNA(Gln) + L-glutamate + ADP + phosphate + H(+). Allows the formation of correctly charged Gln-tRNA(Gln) through the transamidation of misacylated Glu-tRNA(Gln) in the mitochondria. The reaction takes place in the presence of glutamine and ATP through an activated gamma-phospho-Glu-tRNA(Gln). In Kluyveromyces lactis (strain ATCC 8585 / CBS 2359 / DSM 70799 / NBRC 1267 / NRRL Y-1140 / WM37) (Yeast), this protein is Glutamyl-tRNA(Gln) amidotransferase subunit B, mitochondrial.